The sequence spans 268 residues: Small ribosomal subunit protein eS1 (268 aa).

2 disordered regions span residues 1–21 (MAVG…KKKV) and 238–268 (GGGK…QEAV).

This sequence belongs to the eukaryotic ribosomal protein eS1 family. As to quaternary structure, component of the small ribosomal subunit. Mature ribosomes consist of a small (40S) and a large (60S) subunit. The 40S subunit contains about 33 different proteins and 1 molecule of RNA (18S). The 60S subunit contains about 49 different proteins and 3 molecules of RNA (28S, 5.8S and 5S).

Its subcellular location is the cytoplasm. Essential for oogenesis; required for late follicle cell development. The polypeptide is Small ribosomal subunit protein eS1 (Drosophila ananassae (Fruit fly)).